A 59-amino-acid chain; its full sequence is MAKLEITLKRSVIGRPEDQRITVRTLGLKKTNQTVVHEDNAAIRGMINKVSHLVSVKEL.

The protein belongs to the universal ribosomal protein uL30 family. As to quaternary structure, part of the 50S ribosomal subunit.

In Bacillus licheniformis (strain ATCC 14580 / DSM 13 / JCM 2505 / CCUG 7422 / NBRC 12200 / NCIMB 9375 / NCTC 10341 / NRRL NRS-1264 / Gibson 46), this protein is Large ribosomal subunit protein uL30.